Here is a 91-residue protein sequence, read N- to C-terminus: N(2)-fixation sustaining protein CowN (91 aa).

The protein belongs to the CowN family.

Functionally, is required to sustain N(2)-dependent growth in the presence of low levels of carbon monoxide (CO). Probably acts by protecting the N(2) fixation ability of the nitrogenase complex, which is inactivated in the presence of CO. The chain is N(2)-fixation sustaining protein CowN from Gluconacetobacter diazotrophicus (strain ATCC 49037 / DSM 5601 / CCUG 37298 / CIP 103539 / LMG 7603 / PAl5).